The following is a 416-amino-acid chain: MMNVPSAAAASSCDDFGYNATPPPPPSLLPIMDQDGGGGSIQRDHHHHHNHQQLGYNLEPSSLALLPPSNAAAAAAHHATIAHASPHDLLQFYPTSHYLAAAGGAGGGGNPYSHFTAAAAAGSTFQSYYQQPPQAAPEYYFPTLVSSAEENMASFAATQLGLNLGYRTYFPPRGGYTYGHHPPRCQAEGCKADLSSAKRYHRRHKVCEHHSKAPVVVTAGGLHQRFCQQCSRFHLLDEFDDAKKSCRKRLADHNRRRRKSKPSDGEHSGEKRRAQANKSAATKDKAGSSSKNAGIGDGFETQLLGGAHMSKDQDQAMDLGEVVKEAVDPKGKASMQQQQQQAHHGIHQQSHQQHGFPFPSSSGSCLFPQSQGAVSSTDTSNIAQVQEPSLAFHQQHHQHSNILQLGQAMFDLDFDH.

A disordered region spans residues 11–53 (SSCDDFGYNATPPPPPSLLPIMDQDGGGGSIQRDHHHHHNHQQ). The segment at 182–260 (PPRCQAEGCK…ADHNRRRRKS (79 aa)) adopts an SBP-type zinc-finger fold. Cysteine 185, cysteine 190, cysteine 207, histidine 210, cysteine 227, cysteine 230, histidine 234, and cysteine 246 together coordinate Zn(2+). The short motif at 243–259 (KKSCRKRLADHNRRRRK) is the Bipartite nuclear localization signal element. A disordered region spans residues 250–299 (LADHNRRRRKSKPSDGEHSGEKRRAQANKSAATKDKAGSSSKNAGIGDGF). The span at 261-273 (KPSDGEHSGEKRR) shows a compositional bias: basic and acidic residues.

Expressed in stems, leaf sheaths, and young panicles.

The protein resides in the nucleus. In terms of biological role, probable transcription factor that plays an important role in building the laminar joint between leaf blade and leaf sheath boundary, thereby controlling ligule and auricle development. This chain is Squamosa promoter-binding-like protein 8 (SPL8), found in Oryza sativa subsp. indica (Rice).